We begin with the raw amino-acid sequence, 412 residues long: Tyrosine--tRNA ligase (412 aa).

Residue Tyr-31 coordinates L-tyrosine. The 'HIGH' region signature appears at 36-45 (PTAPSLHIGH). The L-tyrosine site is built by Tyr-162 and Gln-166. The 'KMSKS' region motif lies at 222–226 (KIGKT). An ATP-binding site is contributed by Lys-225. Positions 345-412 (KRWLDVVVQL…KKKKQVIDLN (68 aa)) constitute an S4 RNA-binding domain.

It belongs to the class-I aminoacyl-tRNA synthetase family. TyrS type 1 subfamily. As to quaternary structure, homodimer.

The protein resides in the cytoplasm. The enzyme catalyses tRNA(Tyr) + L-tyrosine + ATP = L-tyrosyl-tRNA(Tyr) + AMP + diphosphate + H(+). In terms of biological role, catalyzes the attachment of tyrosine to tRNA(Tyr) in a two-step reaction: tyrosine is first activated by ATP to form Tyr-AMP and then transferred to the acceptor end of tRNA(Tyr). In Chlamydia muridarum (strain MoPn / Nigg), this protein is Tyrosine--tRNA ligase.